We begin with the raw amino-acid sequence, 816 residues long: Sucrose synthase 2 (816 aa).

The interval 280 to 757 (MVLNVVILSP…GLQRIEEKYT (478 aa)) is GT-B glycosyltransferase.

Belongs to the glycosyltransferase 1 family. Plant sucrose synthase subfamily. Forms homotetramers and heterotetramers with SS1, all three possible heterotetramers are formed. Abundant in developing endosperm, low in aleurone, and undetected in coleoptiles and roots. Also detected in crude extracts of anthers and in immature embryos.

It carries out the reaction an NDP-alpha-D-glucose + D-fructose = a ribonucleoside 5'-diphosphate + sucrose + H(+). Sucrose-cleaving enzyme that provides UDP-glucose and fructose for various metabolic pathways. The protein is Sucrose synthase 2 (SS2) of Hordeum vulgare (Barley).